Consider the following 121-residue polypeptide: Large ribosomal subunit protein uL14 (121 aa).

Belongs to the universal ribosomal protein uL14 family. Part of the 50S ribosomal subunit. Forms a cluster with proteins L3 and L19. In the 70S ribosome, L14 and L19 interact and together make contacts with the 16S rRNA in bridges B5 and B8.

Functionally, binds to 23S rRNA. Forms part of two intersubunit bridges in the 70S ribosome. The chain is Large ribosomal subunit protein uL14 from Pseudoalteromonas atlantica (strain T6c / ATCC BAA-1087).